A 350-amino-acid chain; its full sequence is Protein pelota homolog (350 aa).

Belongs to the eukaryotic release factor 1 family. Pelota subfamily. In terms of assembly, monomer. It depends on a divalent metal cation as a cofactor.

The protein localises to the cytoplasm. Its function is as follows. May function in recognizing stalled ribosomes, interact with stem-loop structures in stalled mRNA molecules, and effect endonucleolytic cleavage of the mRNA. May play a role in the release non-functional ribosomes and degradation of damaged mRNAs. Has endoribonuclease activity. The chain is Protein pelota homolog from Methanosarcina acetivorans (strain ATCC 35395 / DSM 2834 / JCM 12185 / C2A).